Here is a 339-residue protein sequence, read N- to C-terminus: Dihydroorotate dehydrogenase (quinone) (339 aa).

FMN is bound by residues 62 to 66 and Thr86; that span reads AGMDK. Lys66 is a binding site for substrate. 111–115 provides a ligand contact to substrate; that stretch reads NRMGF. FMN is bound by residues Asn139 and Asn172. Asn172 is a binding site for substrate. The active-site Nucleophile is Ser175. Residue Asn177 coordinates substrate. Residues Lys217 and Thr245 each coordinate FMN. 246–247 contacts substrate; sequence NT. FMN-binding positions include Gly268, Gly297, and 318–319; that span reads YS.

The protein belongs to the dihydroorotate dehydrogenase family. Type 2 subfamily. In terms of assembly, monomer. It depends on FMN as a cofactor.

The protein localises to the cell membrane. The catalysed reaction is (S)-dihydroorotate + a quinone = orotate + a quinol. Its pathway is pyrimidine metabolism; UMP biosynthesis via de novo pathway; orotate from (S)-dihydroorotate (quinone route): step 1/1. Catalyzes the conversion of dihydroorotate to orotate with quinone as electron acceptor. This chain is Dihydroorotate dehydrogenase (quinone), found in Shewanella baltica (strain OS185).